The following is a 227-amino-acid chain: uncharacterized protein (227 aa).

Gly-17 to Thr-24 contributes to the ATP binding site.

This is an uncharacterized protein from Methanocaldococcus jannaschii (strain ATCC 43067 / DSM 2661 / JAL-1 / JCM 10045 / NBRC 100440) (Methanococcus jannaschii).